The chain runs to 769 residues: Homoaconitase, mitochondrial (769 aa).

The transit peptide at 1-28 (MQSRLLPSGPGRRWISLRVPNTPQRRAF) directs the protein to the mitochondrion. Residues cysteine 391, cysteine 460, and cysteine 463 each coordinate [4Fe-4S] cluster.

This sequence belongs to the aconitase/IPM isomerase family. [4Fe-4S] cluster serves as cofactor.

The protein localises to the mitochondrion. It catalyses the reaction (2R,3S)-homoisocitrate = cis-homoaconitate + H2O. It functions in the pathway amino-acid biosynthesis; L-lysine biosynthesis via AAA pathway; L-alpha-aminoadipate from 2-oxoglutarate: step 3/5. Its function is as follows. Catalyzes the reversible hydration of cis-homoaconitate to (2R,3S)-homoisocitrate, a step in the alpha-aminoadipate pathway for lysine biosynthesis. The sequence is that of Homoaconitase, mitochondrial (lysA) from Aspergillus niger (strain ATCC MYA-4892 / CBS 513.88 / FGSC A1513).